The primary structure comprises 59 residues: Potassium channel toxin alpha-KTx 16.2 (59 aa).

A signal peptide spans M1–A22. 3 disulfide bridges follow: C30–C51, C36–C56, and C40–C58.

The protein belongs to the short scorpion toxin superfamily. Potassium channel inhibitor family. Alpha-KTx 16 subfamily. Expressed by the venom gland.

It localises to the secreted. In terms of biological role, alpha-KTx 16.2: inhibits large conductance calcium-activated potassium channels (KCa1.1/Slo-beta4 KCNMA1/KCNMB4). It appears to block channel activity by a simple bimolecular inhibition process. Shows a fast association rate and a slow dissociation rate of binding on rat brain synaptosome. Significantly inhibits voltage-dependent sodium current and voltage-dependent delayed rectifier potassium currents. Significantly inhibits voltage-dependent sodium current (Nav) and voltage-dependent delayed rectifier potassium current. The sequence is that of Potassium channel toxin alpha-KTx 16.2 from Olivierus martensii (Manchurian scorpion).